The sequence spans 144 residues: Large ribosomal subunit protein uL16 (144 aa).

It belongs to the universal ribosomal protein uL16 family. Part of the 50S ribosomal subunit.

Functionally, binds 23S rRNA and is also seen to make contacts with the A and possibly P site tRNAs. In Thermoanaerobacter sp. (strain X514), this protein is Large ribosomal subunit protein uL16.